Consider the following 549-residue polypeptide: Probable serine/threonine-protein kinase WNK5 (549 aa).

Residues G25–L283 enclose the Protein kinase domain. Residues T105 to F108 and K155 each bind ATP. The active-site Proton acceptor is the D172. The segment at E414–Q490 is disordered. Residues D452–D463 are compositionally biased toward acidic residues. The segment covering R467–S476 has biased composition (low complexity). Phosphoserine is present on S504. Residues R525 to C549 are disordered. Over residues P531 to C549 the composition is skewed to polar residues.

This sequence belongs to the protein kinase superfamily. Ser/Thr protein kinase family. WNK subfamily. Interacts with AHK4.

It catalyses the reaction L-seryl-[protein] + ATP = O-phospho-L-seryl-[protein] + ADP + H(+). The catalysed reaction is L-threonyl-[protein] + ATP = O-phospho-L-threonyl-[protein] + ADP + H(+). Its function is as follows. Regulates flowering time by modulating the photoperiod pathway. In Arabidopsis thaliana (Mouse-ear cress), this protein is Probable serine/threonine-protein kinase WNK5 (WNK5).